Reading from the N-terminus, the 443-residue chain is UPF0597 protein Dvul_2496 (443 aa).

The interval 156 to 178 (GMERAPEADGTLHGGASCEPSAS) is disordered.

The protein belongs to the UPF0597 family.

The chain is UPF0597 protein Dvul_2496 from Nitratidesulfovibrio vulgaris (strain DP4) (Desulfovibrio vulgaris).